A 613-amino-acid chain; its full sequence is MTMSFCALLFFLIISPTLAATKSAADYYVRSLPGAPEGPLLKMHAGHIEVDAPNNGNLFFWHYQNRHIANRQRTVIWLNGGPGCSSMDGALMEIGPYRLKDNHTLEYNNGSWDEFANLLFVDQPVGTGFSYVNTNSYLHELDEMAAQFIIFLEKWFQLFPEYERDDIYIAGESYAGQHIPYIAKAIQERNKKVDDKNSARWNLRGLVIGNGWISPAQQYPSYLNFAYTEGLVKEGSSLAKDLDVYQSVCESKISAAPNAVNIKDCESVLQQILSRTMDSERKCYNMYDVRLRDVYPSCGMNWPSDLVSVKPYLQSRDVVRALNINPDKKSGWEECSGAVGSTFTAANSVPSVQLLPELLESGVRILLFSGDKDLICNHIGTEQLINNMKWNGGIGFETSPGVWAPRRHWTFEGEPAGIYQYARNLTYVLFYNASHMVPYDLPRQSRDMLDRFMRVDIANIGGQPADSRIDGEKLPQTSVGGHPNSTAAEQQAKEKIKETEWKAYAKSGEAALIVVIIGVTVWGFFIWRSRRRNRGYEGVYQKELGSGSILERFQNKRSGAGDVEAGDFDESELDTLHSPGLERENYAVGDDSDEDDPNHPRPTASSREDGTHP.

The first 19 residues, 1-19 (MTMSFCALLFFLIISPTLA), serve as a signal peptide directing secretion. The Lumenal portion of the chain corresponds to 20–506 (ATKSAADYYV…KETEWKAYAK (487 aa)). N-linked (GlcNAc...) asparagine glycans are attached at residues N102 and N109. Active-site residues include S173 and D373. N-linked (GlcNAc...) asparagine glycans are attached at residues N424 and N432. The active site involves H435. Residues 463 to 490 (QPADSRIDGEKLPQTSVGGHPNSTAAEQ) form a disordered region. Polar residues predominate over residues 475–489 (PQTSVGGHPNSTAAE). N484 is a glycosylation site (N-linked (GlcNAc...) asparagine). The chain crosses the membrane as a helical span at residues 507-527 (SGEAALIVVIIGVTVWGFFIW). The Cytoplasmic segment spans residues 528 to 613 (RSRRRNRGYE…ASSREDGTHP (86 aa)). The tract at residues 559 to 613 (GAGDVEAGDFDESELDTLHSPGLERENYAVGDDSDEDDPNHPRPTASSREDGTHP) is disordered. Acidic residues predominate over residues 564–573 (EAGDFDESEL).

The protein belongs to the peptidase S10 family.

The protein resides in the golgi apparatus. It localises to the trans-Golgi network membrane. The catalysed reaction is Preferential release of a C-terminal arginine or lysine residue.. Protease with a carboxypeptidase B-like function involved in the C-terminal processing of the lysine and arginine residues from protein precursors. Promotes cell fusion and is involved in the programmed cell death. This chain is Pheromone-processing carboxypeptidase kex1 (kex1), found in Aspergillus clavatus (strain ATCC 1007 / CBS 513.65 / DSM 816 / NCTC 3887 / NRRL 1 / QM 1276 / 107).